The sequence spans 193 residues: Putative protein-glutamate methylesterase/protein-glutamine glutaminase (193 aa).

Residues 1–179 enclose the CheB-type methylesterase domain; that stretch reads MNYEAIVIGV…DYVLSLEKIA (179 aa). Active-site residues include S11, H38, and D131.

It belongs to the CheB family.

It is found in the cytoplasm. The enzyme catalyses [protein]-L-glutamate 5-O-methyl ester + H2O = L-glutamyl-[protein] + methanol + H(+). The catalysed reaction is L-glutaminyl-[protein] + H2O = L-glutamyl-[protein] + NH4(+). Its function is as follows. May be involved in chemotaxis. This is Putative protein-glutamate methylesterase/protein-glutamine glutaminase (cheB2) from Leptospira interrogans serogroup Icterohaemorrhagiae serovar copenhageni (strain Fiocruz L1-130).